The following is a 352-amino-acid chain: Cyclin-dependent kinase-like 1 (352 aa).

In terms of domain architecture, Protein kinase spans 4-287; the sequence is YEKIGKIGEG…CEQLLQHPYF (284 aa). ATP is bound by residues 10-18 and lysine 33; that span reads IGEGSYGVV. Positions 45 to 51 match the [NKR]KIAxRE motif; sequence KKIALRE. Aspartate 126 serves as the catalytic Proton acceptor.

The protein belongs to the protein kinase superfamily. CMGC Ser/Thr protein kinase family. CDC2/CDKX subfamily.

It localises to the cytoplasm. Its subcellular location is the nucleus. The catalysed reaction is L-seryl-[protein] + ATP = O-phospho-L-seryl-[protein] + ADP + H(+). It carries out the reaction L-threonyl-[protein] + ATP = O-phospho-L-threonyl-[protein] + ADP + H(+). The polypeptide is Cyclin-dependent kinase-like 1 (Rattus norvegicus (Rat)).